The chain runs to 272 residues: D-aminoacyl-tRNA deacylase (272 aa).

In terms of assembly, monomer. The cofactor is Zn(2+).

The enzyme catalyses a D-aminoacyl-tRNA + H2O = a tRNA + a D-alpha-amino acid + H(+). The catalysed reaction is glycyl-tRNA(Ala) + H2O = tRNA(Ala) + glycine + H(+). It catalyses the reaction D-tyrosyl-tRNA(Tyr) + H2O = D-tyrosine + tRNA(Tyr). Its function is as follows. D-aminoacyl-tRNA deacylase with broad substrate specificity. By recycling D-aminoacyl-tRNA to D-amino acids and free tRNA molecules, this enzyme counteracts the toxicity associated with the formation of D-aminoacyl-tRNA entities in vivo. Catalyzes the hydrolysis of D-tyrosyl-tRNA(Tyr) and D-aspartyl-tRNA(Asp). This Pyrococcus abyssi (strain GE5 / Orsay) protein is D-aminoacyl-tRNA deacylase.